A 557-amino-acid chain; its full sequence is Formate--tetrahydrofolate ligase (557 aa).

Residue 65–72 (TPAGEGKT) coordinates ATP.

The protein belongs to the formate--tetrahydrofolate ligase family.

It catalyses the reaction (6S)-5,6,7,8-tetrahydrofolate + formate + ATP = (6R)-10-formyltetrahydrofolate + ADP + phosphate. It functions in the pathway one-carbon metabolism; tetrahydrofolate interconversion. The chain is Formate--tetrahydrofolate ligase from Methylorubrum extorquens (strain CM4 / NCIMB 13688) (Methylobacterium extorquens).